The chain runs to 221 residues: Probable hydrogenase maturation factor HypB (221 aa).

A G-domain region spans residues 35-196; that stretch reads AFDFMGAIGS…KRINPDAEVV (162 aa). Positions 95 and 96 each coordinate Ni(2+). Zn(2+) contacts are provided by Cys95, His96, His100, His104, and Cys127. Cys127 contacts Ni(2+).

It belongs to the SIMIBI class G3E GTPase family. HypB/HupM subfamily. In terms of assembly, homodimer.

Its function is as follows. Involved in the maturation of [NiFe] hydrogenases. Required for nickel insertion into the metal center of the hydrogenase. Exhibits a low intrinsic GTPase activity, which is essential for nickel insertion. This is Probable hydrogenase maturation factor HypB from Methanocaldococcus jannaschii (strain ATCC 43067 / DSM 2661 / JAL-1 / JCM 10045 / NBRC 100440) (Methanococcus jannaschii).